Here is a 180-residue protein sequence, read N- to C-terminus: Transcriptional repressor NrdR (180 aa).

A zinc finger lies at 3–34 (CPRCSKQEIRVLESRSAEGGQSVRRRRECMSC). In terms of domain architecture, ATP-cone spans 49–139 (IMVIKRDGSR…VYRQFQGIKD (91 aa)). Residues 155–180 (LERLLQDSSASDSESSGSPDLVGEYS) are disordered. A compositionally biased stretch (low complexity) spans 160–174 (QDSSASDSESSGSPD).

Belongs to the NrdR family. It depends on Zn(2+) as a cofactor.

In terms of biological role, negatively regulates transcription of bacterial ribonucleotide reductase nrd genes and operons by binding to NrdR-boxes. The chain is Transcriptional repressor NrdR from Synechococcus sp. (strain JA-2-3B'a(2-13)) (Cyanobacteria bacterium Yellowstone B-Prime).